A 305-amino-acid chain; its full sequence is Beta-lactamase ROB-1 (305 aa).

The first 33 residues, 1 to 33, serve as a signal peptide directing secretion; the sequence is MLNKLKIGTLLLLTLTACSPNSVHSVTSNPQPA. Catalysis depends on serine 86, which acts as the Acyl-ester intermediate. 248–250 contacts substrate; sequence KSG.

The protein belongs to the class-A beta-lactamase family.

The catalysed reaction is a beta-lactam + H2O = a substituted beta-amino acid. The sequence is that of Beta-lactamase ROB-1 (rob1) from Actinobacillus pleuropneumoniae (Haemophilus pleuropneumoniae).